Reading from the N-terminus, the 385-residue chain is Succinate--CoA ligase [ADP-forming] subunit beta (385 aa).

The ATP-grasp domain occupies lysine 9–glutamate 244. ATP contacts are provided by residues lysine 46, glycine 53–glycine 55, glutamate 99, cysteine 102, and glutamate 107. Residues asparagine 199 and aspartate 213 each coordinate Mg(2+). Serine 220 carries the post-translational modification Phosphoserine. Substrate contacts are provided by residues asparagine 264 and glycine 321–methionine 323.

It belongs to the succinate/malate CoA ligase beta subunit family. Heterotetramer of two alpha and two beta subunits. Interacts with BrxC. It depends on Mg(2+) as a cofactor.

The catalysed reaction is succinate + ATP + CoA = succinyl-CoA + ADP + phosphate. It catalyses the reaction GTP + succinate + CoA = succinyl-CoA + GDP + phosphate. Its pathway is carbohydrate metabolism; tricarboxylic acid cycle; succinate from succinyl-CoA (ligase route): step 1/1. In terms of biological role, succinyl-CoA synthetase functions in the citric acid cycle (TCA), coupling the hydrolysis of succinyl-CoA to the synthesis of either ATP or GTP and thus represents the only step of substrate-level phosphorylation in the TCA. The beta subunit provides nucleotide specificity of the enzyme and binds the substrate succinate, while the binding sites for coenzyme A and phosphate are found in the alpha subunit. The polypeptide is Succinate--CoA ligase [ADP-forming] subunit beta (Bacillus subtilis (strain 168)).